Reading from the N-terminus, the 179-residue chain is Cytochrome b6-f complex iron-sulfur subunit (179 aa).

A helical transmembrane segment spans residues 21–43 (LLTFGTVTGVALGALYPVVNYFI). The Rieske domain maps to 61 to 162 (GNDVSVTKFL…TNVSDDKIVL (102 aa)). Residues Cys-108, His-110, Cys-126, and His-129 each contribute to the [2Fe-2S] cluster site. Cysteines 113 and 128 form a disulfide.

This sequence belongs to the Rieske iron-sulfur protein family. The 4 large subunits of the cytochrome b6-f complex are cytochrome b6, subunit IV (17 kDa polypeptide, PetD), cytochrome f and the Rieske protein, while the 4 small subunits are PetG, PetL, PetM and PetN. The complex functions as a dimer. [2Fe-2S] cluster is required as a cofactor.

Its subcellular location is the cellular thylakoid membrane. The catalysed reaction is 2 oxidized [plastocyanin] + a plastoquinol + 2 H(+)(in) = 2 reduced [plastocyanin] + a plastoquinone + 4 H(+)(out). In terms of biological role, component of the cytochrome b6-f complex, which mediates electron transfer between photosystem II (PSII) and photosystem I (PSI), cyclic electron flow around PSI, and state transitions. This Nostoc punctiforme (strain ATCC 29133 / PCC 73102) protein is Cytochrome b6-f complex iron-sulfur subunit.